The chain runs to 144 residues: Large ribosomal subunit protein uL11 (144 aa).

This sequence belongs to the universal ribosomal protein uL11 family. As to quaternary structure, part of the ribosomal stalk of the 50S ribosomal subunit. Interacts with L10 and the large rRNA to form the base of the stalk. L10 forms an elongated spine to which L12 dimers bind in a sequential fashion forming a multimeric L10(L12)X complex. Post-translationally, one or more lysine residues are methylated.

Forms part of the ribosomal stalk which helps the ribosome interact with GTP-bound translation factors. This chain is Large ribosomal subunit protein uL11, found in Nocardia farcinica (strain IFM 10152).